A 116-amino-acid polypeptide reads, in one-letter code: Ribosome-binding factor A (116 aa).

It belongs to the RbfA family. As to quaternary structure, monomer. Binds 30S ribosomal subunits, but not 50S ribosomal subunits or 70S ribosomes.

The protein resides in the cytoplasm. Its function is as follows. One of several proteins that assist in the late maturation steps of the functional core of the 30S ribosomal subunit. Associates with free 30S ribosomal subunits (but not with 30S subunits that are part of 70S ribosomes or polysomes). Required for efficient processing of 16S rRNA. May interact with the 5'-terminal helix region of 16S rRNA. The sequence is that of Ribosome-binding factor A from Pediococcus pentosaceus (strain ATCC 25745 / CCUG 21536 / LMG 10740 / 183-1w).